The following is a 91-amino-acid chain: Hepcidin-1 (91 aa).

A signal peptide spans 1–24; it reads MKLSNVFLAAVVILTCVCVFQITA. Residues 25-64 constitute a propeptide that is removed on maturation; it reads VPFIQQVQDEHHVESEELQENQHLTEAEHRQTDPLVLFRT. 4 disulfides stabilise this stretch: Cys73–Cys89, Cys76–Cys79, Cys77–Cys85, and Cys80–Cys88.

This sequence belongs to the hepcidin family.

It localises to the secreted. Seems to act as a signaling molecule involved in the maintenance of iron homeostasis. Seems to be required in conjunction with HFE to regulate both intestinal iron absorption and iron storage in macrophages. May also have antimicrobial activity. The sequence is that of Hepcidin-1 (hamp1) from Danio rerio (Zebrafish).